Consider the following 470-residue polypeptide: UDP-glycosyltransferase 72D1 (470 aa).

Residues Ser-276, 343–345 (APQ), 360–368 (HCGWSSALE), and 382–385 (YAEQ) each bind UDP-alpha-D-glucose.

The protein belongs to the UDP-glycosyltransferase family.

The sequence is that of UDP-glycosyltransferase 72D1 (UGT72D1) from Arabidopsis thaliana (Mouse-ear cress).